A 97-amino-acid polypeptide reads, in one-letter code: Putative pterin-4-alpha-carbinolamine dehydratase (97 aa).

It belongs to the pterin-4-alpha-carbinolamine dehydratase family.

It carries out the reaction (4aS,6R)-4a-hydroxy-L-erythro-5,6,7,8-tetrahydrobiopterin = (6R)-L-erythro-6,7-dihydrobiopterin + H2O. This Christiangramia forsetii (strain DSM 17595 / CGMCC 1.15422 / KT0803) (Gramella forsetii) protein is Putative pterin-4-alpha-carbinolamine dehydratase.